A 300-amino-acid polypeptide reads, in one-letter code: 4-hydroxy-tetrahydrodipicolinate synthase (300 aa).

A pyruvate-binding site is contributed by T55. Y143 acts as the Proton donor/acceptor in catalysis. Residue K171 is the Schiff-base intermediate with substrate of the active site. I211 is a binding site for pyruvate.

The protein belongs to the DapA family. As to quaternary structure, homotetramer; dimer of dimers.

It localises to the cytoplasm. The catalysed reaction is L-aspartate 4-semialdehyde + pyruvate = (2S,4S)-4-hydroxy-2,3,4,5-tetrahydrodipicolinate + H2O + H(+). Its pathway is amino-acid biosynthesis; L-lysine biosynthesis via DAP pathway; (S)-tetrahydrodipicolinate from L-aspartate: step 3/4. In terms of biological role, catalyzes the condensation of (S)-aspartate-beta-semialdehyde [(S)-ASA] and pyruvate to 4-hydroxy-tetrahydrodipicolinate (HTPA). The chain is 4-hydroxy-tetrahydrodipicolinate synthase from Mycobacterium leprae (strain Br4923).